The following is a 240-amino-acid chain: Uridylate kinase (240 aa).

12-15 is a binding site for ATP; it reads KLSG. Gly-54 provides a ligand contact to UMP. Residues Gly-55 and Arg-59 each contribute to the ATP site. Residues Asp-74 and 135 to 142 contribute to the UMP site; that span reads TGNPFFTT. Thr-162, Tyr-168, and Asp-171 together coordinate ATP.

Belongs to the UMP kinase family. In terms of assembly, homohexamer.

Its subcellular location is the cytoplasm. The catalysed reaction is UMP + ATP = UDP + ADP. It participates in pyrimidine metabolism; CTP biosynthesis via de novo pathway; UDP from UMP (UMPK route): step 1/1. Its activity is regulated as follows. Inhibited by UTP. Catalyzes the reversible phosphorylation of UMP to UDP. This chain is Uridylate kinase, found in Xanthomonas euvesicatoria pv. vesicatoria (strain 85-10) (Xanthomonas campestris pv. vesicatoria).